The sequence spans 406 residues: LIM/homeobox protein Lhx2 (406 aa).

LIM zinc-binding domains lie at 53 to 105 (CAGC…CKED) and 115 to 168 (CARC…CRLH). The segment at 250 to 270 (DAEHLDRDQPYPSSQKTKRMR) is disordered. The homeobox DNA-binding region spans 266-325 (TKRMRTSFKHHQLRTMKSYFAINHNPDAKDLKQLAQKTGLTKRVLQVWFQNARAKFRRNL). A Nuclear localization signal motif is present at residues 307–323 (KRVLQVWFQNARAKFRR). Residues 328 to 356 (QENTGVDKSTDAALQTGTPSGPASELSNA) are compositionally biased toward polar residues. Disordered stretches follow at residues 328-374 (QENT…TSPT) and 387-406 (GNLE…TNLF). The segment covering 357 to 374 (SLSPSSTPTTLTDLTSPT) has biased composition (low complexity). The span at 396 to 406 (SPSQTTLTNLF) shows a compositional bias: polar residues.

In terms of assembly, interacts (via LIM domains) with CITED2. Interacts with POU4F2.

It is found in the nucleus. Functionally, acts as a transcriptional activator. Stimulates the promoter of the alpha-glycoprotein gene. Transcriptional regulatory protein involved in the control of cell differentiation in developing lymphoid and neural cell types. The chain is LIM/homeobox protein Lhx2 (LHX2) from Homo sapiens (Human).